Reading from the N-terminus, the 217-residue chain is Ras-related protein RABA2d (217 aa).

19–26 (GDSGVGKT) provides a ligand contact to GTP. Residues 41–49 (SKSTIGVEF) carry the Effector region motif. GTP-binding positions include 67 to 71 (DTAGQ), 125 to 128 (NKAD), and 155 to 156 (SA). Residues 196 to 217 (GQGTTINVEDTSGAGKRGCCST) are disordered. Residues cysteine 214 and cysteine 215 are each lipidated (S-geranylgeranyl cysteine).

This sequence belongs to the small GTPase superfamily. Rab family. In terms of tissue distribution, expressed in root tips.

It is found in the endosome membrane. The protein resides in the golgi apparatus. The protein localises to the trans-Golgi network membrane. Intracellular vesicle trafficking and protein transport. This Arabidopsis thaliana (Mouse-ear cress) protein is Ras-related protein RABA2d (RABA2D).